We begin with the raw amino-acid sequence, 140 residues long: Ubiquitin-like protein ATG12 (140 aa).

Residues 1–52 (MAEEPQTVLQLPPSSAAGGEGLTDVSPETTTPEPPSSAAVSPGTEEPAGDTK) are disordered. The segment covering 25–42 (VSPETTTPEPPSSAAVSP) has biased composition (low complexity). Gly-140 is covalently cross-linked (Glycyl lysine isopeptide (Gly-Lys) (interchain with K-? in acceptor protein)).

The protein belongs to the ATG12 family. In terms of assembly, forms a conjugate with ATG5. Part of the minor complex composed of 4 sets of ATG12-ATG5 and ATG16L1 (400 kDa); this complex interacts with ATG3 leading to disruption of ATG7 interaction and promotion of ATG8-like proteins lipidation. Forms an 800-kDa complex composed of ATG12-ATG5 and ATG16L2. Interacts with DHX58/RIG-1, IFIH1/MDA5 and MAVS/IPS-1 in monomeric form as well as in ATG12-ATG5 conjugate. The interaction with MAVS is further enhanced upon vesicular stomatitis virus (VSV) infection. Interacts with ATG3; this interaction is essential for phosphatidylethanolamine (PE)-conjugated ATG8-like proteins formation. Interacts with ATG7. Interacts with ATG10. Interacts with TECPR1. Interacts with SH3BGRL. The ATG12-ATG5 conjugate interacts with PDCD6IP (via the BRO1 domain); this interaction is bridged by ATG12 and promotes multiple PDCD6IP-mediated functions such as endolysosomal trafficking, macroautophagy and exosome biogenesis. Acetylated by EP300.

The protein resides in the cytoplasm. The protein localises to the preautophagosomal structure membrane. Its function is as follows. Ubiquitin-like protein involved in autophagy vesicles formation. Conjugation with ATG5 through a ubiquitin-like conjugating system involving also ATG7 as an E1-like activating enzyme and ATG10 as an E2-like conjugating enzyme, is essential for its function. The ATG12-ATG5 conjugate acts as an E3-like enzyme which is required for lipidation of ATG8 family proteins and their association to the vesicle membranes. The ATG12-ATG5 conjugate also negatively regulates the innate antiviral immune response by blocking the type I IFN production pathway through direct association with RARRES3 and MAVS. Also plays a role in translation or delivery of incoming viral RNA to the translation apparatus. As part of the ATG8 conjugation system with ATG5 and ATG16L1, required for recruitment of LRRK2 to stressed lysosomes and induction of LRRK2 kinase activity in response to lysosomal stress. The protein is Ubiquitin-like protein ATG12 of Pongo abelii (Sumatran orangutan).